Here is a 225-residue protein sequence, read N- to C-terminus: tRNA (guanine-N(1)-)-methyltransferase (225 aa).

S-adenosyl-L-methionine-binding positions include glycine 110 and 130–135 (VGDYVL).

Belongs to the RNA methyltransferase TrmD family. In terms of assembly, homodimer.

Its subcellular location is the cytoplasm. The catalysed reaction is guanosine(37) in tRNA + S-adenosyl-L-methionine = N(1)-methylguanosine(37) in tRNA + S-adenosyl-L-homocysteine + H(+). In terms of biological role, specifically methylates guanosine-37 in various tRNAs. The sequence is that of tRNA (guanine-N(1)-)-methyltransferase from Neorickettsia sennetsu (strain ATCC VR-367 / Miyayama) (Ehrlichia sennetsu).